The chain runs to 380 residues: Cytochrome b (380 aa).

The next 4 membrane-spanning stretches (helical) occupy residues 34–54 (FGSL…LLAM), 78–99 (WLLH…FLHI), 114–134 (WNTG…GYVL), and 179–199 (FFAL…IHLM). Heme b contacts are provided by H84 and H98. Residues H183 and H197 each contribute to the heme b site. Residue H202 participates in a ubiquinone binding. The next 4 membrane-spanning stretches (helical) occupy residues 227 to 247 (IKDI…TLFS), 289 to 309 (LGGV…PFLH), 321 to 341 (LSQT…WVGS), and 348 to 368 (FIII…ILFP).

It belongs to the cytochrome b family. As to quaternary structure, the cytochrome bc1 complex contains 11 subunits: 3 respiratory subunits (MT-CYB, CYC1 and UQCRFS1), 2 core proteins (UQCRC1 and UQCRC2) and 6 low-molecular weight proteins (UQCRH/QCR6, UQCRB/QCR7, UQCRQ/QCR8, UQCR10/QCR9, UQCR11/QCR10 and a cleavage product of UQCRFS1). This cytochrome bc1 complex then forms a dimer. Requires heme b as cofactor.

The protein resides in the mitochondrion inner membrane. Its function is as follows. Component of the ubiquinol-cytochrome c reductase complex (complex III or cytochrome b-c1 complex) that is part of the mitochondrial respiratory chain. The b-c1 complex mediates electron transfer from ubiquinol to cytochrome c. Contributes to the generation of a proton gradient across the mitochondrial membrane that is then used for ATP synthesis. This is Cytochrome b (MT-CYB) from Meleagris gallopavo (Wild turkey).